The primary structure comprises 244 residues: Na(+)-translocating NADH-quinone reductase subunit E (244 aa).

Transmembrane regions (helical) follow at residues 11–31 (LLGI…TFLG), 47–67 (GLGM…WLIH), 90–110 (FLEL…LELL), 123–143 (GIFL…LFGI), 153–173 (VVFS…FATI), and 189–209 (MGIS…LTGI).

The protein belongs to the NqrDE/RnfAE family. Composed of six subunits; NqrA, NqrB, NqrC, NqrD, NqrE and NqrF.

It is found in the cell inner membrane. The enzyme catalyses a ubiquinone + n Na(+)(in) + NADH + H(+) = a ubiquinol + n Na(+)(out) + NAD(+). Functionally, NQR complex catalyzes the reduction of ubiquinone-1 to ubiquinol by two successive reactions, coupled with the transport of Na(+) ions from the cytoplasm to the periplasm. NqrA to NqrE are probably involved in the second step, the conversion of ubisemiquinone to ubiquinol. The protein is Na(+)-translocating NADH-quinone reductase subunit E of Chlamydia muridarum (strain MoPn / Nigg).